The primary structure comprises 560 residues: MGFIVGVVIGLLVGIAIIIGFVKLENSRSKLRSELANTVAAFARMTVEDSRKLLPPEFYPSWVVFSERQKLTWLNHHLTKIWPYVDEAASELIKASVEPVLEQYRPAIVASLTFSKLTLGTVAPQFTGVSVIDGDKNGITLELDMQWDGNPNIVLGVKTLVGVSLPIQVKNIGFTGVFRLIFRPLVEDFPCFGAVSVSLREKKKLDFTLKVVGGDISAIPGLSEAIEETIRDAVEDSITWPVRKVIPIIPGDYSDLELKPVGMLEVKLVQAKNLTNKDLVGKSDPFAKMFIRPLREKTKRSKTINNDLNPIWNEHFEFVVEDASTQHLVVRIYDDEGVQASELIGCAQIRLCELEPGKVKDVWLKLVKDLEIQRDTKNRGEVHLELLYIPYGSGNGIVNPFVTSSMTSLERVLKNDTTDEENASSRKRKDVIVRGVLSVTVISAEEIPIQDLMGKADPYVVLSMKKSGAKSKTRVVNDSLNPVWNQTFDFVVEDGLHDMLVLEVWDHDTFGKDYIGRCILTLTRVIMEEEYKDWYPLDESKTGKLQLHLKWMAQSIYRDS.

The helical transmembrane segment at 2 to 22 (GFIVGVVIGLLVGIAIIIGFV) threads the bilayer. An SMP-LTD domain is found at 67–249 (ERQKLTWLNH…WPVRKVIPII (183 aa)). The phospholipid binding stretch occupies residues 227-523 (EETIRDAVED…YIGRCILTLT (297 aa)). C2 domains are found at residues 243–364 (RKVI…DVWL) and 417–535 (TTDE…KDWY). Positions 278, 284, 334, 336, 451, 457, 506, 508, and 513 each coordinate Ca(2+).

This sequence belongs to the synaptotagmin family. It depends on Ca(2+) as a cofactor.

The protein resides in the membrane. May be involved in membrane trafficking. This chain is Synaptotagmin-5 (SYT5), found in Arabidopsis thaliana (Mouse-ear cress).